The sequence spans 208 residues: AN1-type zinc finger protein 6 (208 aa).

The A20-type zinc-finger motif lies at 8–42; it reads SQVPMLCSTGCGFYGNPRTNGMCSVCYKEHLQRQN. 4 residues coordinate Zn(2+): Cys-14, Cys-18, Cys-30, and Cys-33. The segment covering 41–68 has biased composition (polar residues); it reads QNSSNGRISPPATSVSSLSESLPVQCTD. A disordered region spans residues 41-140; it reads QNSSNGRISP…PSEEQSKSLE (100 aa). The residue at position 49 (Ser-49) is a Phosphoserine. Over residues 80–94 the composition is skewed to low complexity; the sequence is STSSSMQPSPVSNQS. Composition is skewed to polar residues over residues 95 to 110 and 120 to 133; these read LLSE…STSV and VQAS…QPSE. Residues 143–189 form an AN1-type zinc finger; that stretch reads KQKKNRCFMCRKKVGLTGFECRCGNVYCGVHRYSDVHNCSYNYKADA. Residues Cys-149, Cys-152, Cys-163, Cys-165, Cys-170, His-173, His-179, and Cys-181 each contribute to the Zn(2+) site. Lys-204 is modified (N6-acetyllysine).

As to quaternary structure, interacts with PKN1. Interacts with TRAF2. Interacts with mono- and polyubiquitin. Interacts with PEX6. Interacts with PEX5 (Cys-linked ubiquitinated). In terms of tissue distribution, widely expressed with high level in heart, skeletal muscle, liver, kidney and placenta.

Its subcellular location is the cytoplasm. In terms of biological role, involved in regulation of TNF-alpha induced NF-kappa-B activation and apoptosis. Involved in modulation of 'Lys-48'-linked polyubiquitination status of TRAF2 and decreases association of TRAF2 with RIPK1. Required for PTS1 target sequence-dependent protein import into peroxisomes and PEX5 stability; may cooperate with PEX6. In vitro involved in PEX5 export from the cytosol to peroxisomes. This Homo sapiens (Human) protein is AN1-type zinc finger protein 6 (ZFAND6).